Consider the following 26-residue polypeptide: Peroxidase 1 (26 aa).

D15 provides a ligand contact to Ca(2+).

This sequence belongs to the peroxidase family. Classical plant (class III) peroxidase subfamily. It depends on heme b as a cofactor. Ca(2+) is required as a cofactor.

The protein resides in the secreted. It catalyses the reaction 2 a phenolic donor + H2O2 = 2 a phenolic radical donor + 2 H2O. Its function is as follows. Removal of H(2)O(2), oxidation of toxic reductants, biosynthesis and degradation of lignin, suberization, auxin catabolism, response to environmental stresses such as wounding, pathogen attack and oxidative stress. These functions might be dependent on each isozyme/isoform in each plant tissue. The chain is Peroxidase 1 from Vitis vinifera (Grape).